A 220-amino-acid chain; its full sequence is Protein GrpE (220 aa).

The tract at residues 1–22 (MSDEKNKFTDASFENCDLKNPS) is disordered.

It belongs to the GrpE family. Homodimer.

It localises to the cytoplasm. Functionally, participates actively in the response to hyperosmotic and heat shock by preventing the aggregation of stress-denatured proteins, in association with DnaK and GrpE. It is the nucleotide exchange factor for DnaK and may function as a thermosensor. Unfolded proteins bind initially to DnaJ; upon interaction with the DnaJ-bound protein, DnaK hydrolyzes its bound ATP, resulting in the formation of a stable complex. GrpE releases ADP from DnaK; ATP binding to DnaK triggers the release of the substrate protein, thus completing the reaction cycle. Several rounds of ATP-dependent interactions between DnaJ, DnaK and GrpE are required for fully efficient folding. The chain is Protein GrpE from Bartonella henselae (strain ATCC 49882 / DSM 28221 / CCUG 30454 / Houston 1) (Rochalimaea henselae).